The primary structure comprises 356 residues: Nicotinate-nucleotide--dimethylbenzimidazole phosphoribosyltransferase (356 aa).

The active-site Proton acceptor is the Glu-317.

This sequence belongs to the CobT family. In terms of assembly, homodimer.

The catalysed reaction is 5,6-dimethylbenzimidazole + nicotinate beta-D-ribonucleotide = alpha-ribazole 5'-phosphate + nicotinate + H(+). The protein operates within nucleoside biosynthesis; alpha-ribazole biosynthesis; alpha-ribazole from 5,6-dimethylbenzimidazole: step 1/2. In terms of biological role, catalyzes the synthesis of alpha-ribazole-5'-phosphate from nicotinate mononucleotide (NAMN) and 5,6-dimethylbenzimidazole (DMB). In Salmonella agona (strain SL483), this protein is Nicotinate-nucleotide--dimethylbenzimidazole phosphoribosyltransferase.